The chain runs to 171 residues: Translation initiation factor IF-3 (171 aa).

This sequence belongs to the IF-3 family. Monomer.

The protein localises to the cytoplasm. IF-3 binds to the 30S ribosomal subunit and shifts the equilibrium between 70S ribosomes and their 50S and 30S subunits in favor of the free subunits, thus enhancing the availability of 30S subunits on which protein synthesis initiation begins. The chain is Translation initiation factor IF-3 from Listeria innocua serovar 6a (strain ATCC BAA-680 / CLIP 11262).